The sequence spans 389 residues: Inactive serine/threonine-protein kinase ZRK12 (389 aa).

In terms of domain architecture, Protein kinase spans 41–342 (SADEIRKATN…ETQFDSHQDI (302 aa)). Residues 47-55 (KATNNFGVS) and K84 each bind ATP. Y129 bears the Phosphotyrosine mark. T214 carries the phosphothreonine modification. Y222 is subject to Phosphotyrosine.

Belongs to the protein kinase superfamily. Ser/Thr protein kinase family.

Together with RPP13L4/ZAR1, involved in the regulation of the ambient temperature-sensitive intersection of growth and immune response in the absence of pathogens. The polypeptide is Inactive serine/threonine-protein kinase ZRK12 (Arabidopsis thaliana (Mouse-ear cress)).